Here is a 356-residue protein sequence, read N- to C-terminus: MKQLIVNSVATVALASLVAGCFEPPPATTTQTGFRGLSMGEVLHPATVKAKKERDAQYPPALAAVKAEGPPVSQVYKNVKVLGNLTEAEFLRTMTAITEWVSPQEGCTYCHDENNLASEAKYPYVVARRMLEMTRAINTNWTQHVAQTGVTCYTCHRGTPLPPYVRYLEPTLPLNNRETPTHVERVETRSGYVVRLAKYTAYSALNYDPFTMFLANDKRQVRVVPQTALPLVGVSRGKERRPLSDAYATFALMMSISDSLGTNCTFCHNAQTFESWGKKSTPQRAIAWWGIRMVRDLNMNYLAPLNASLPASRLGRQGEAPQADCRTCHQGVTKPLFGASRLKDYPELGPIKAAAK.

Residues 1-20 (MKQLIVNSVATVALASLVAG) form the signal peptide. Cys-21 carries S-diacylglycerol cysteine lipidation. 16 residues coordinate heme: Met-94, Cys-107, Cys-110, His-111, Met-130, His-144, Cys-152, Cys-155, His-156, Met-253, Cys-264, Cys-267, His-268, Cys-325, Cys-328, and His-329.

As to quaternary structure, component of the photosynthetic reaction center composed of protein subunits L (PufL), M (PufM), H (PuhA) and cytochrome C (PufC). Post-translationally, binds 4 heme groups per subunit. In terms of processing, after the signal sequence is removed, the N-terminal cysteine is modified to form a diacylglyceride thioether, but the alpha-amino group is free and is not N-palmitoylated.

The protein localises to the cellular chromatophore membrane. In terms of biological role, the reaction center of purple bacteria contains a tightly bound cytochrome molecule which re-reduces the photo oxidized primary electron donor. The protein is Photosynthetic reaction center cytochrome c subunit of Blastochloris viridis (Rhodopseudomonas viridis).